Consider the following 1020-residue polypeptide: Protein translocase subunit SecA (1020 aa).

ATP contacts are provided by residues Gln-99, 117–121, and Asp-633; that span reads GEGKT. The tract at residues 963-992 is disordered; that stretch reads NEQPSQEMAADEETQEESKIEENKPEPIVV. Basic and acidic residues predominate over residues 978-987; that stretch reads EESKIEENKP. Residues Cys-1002, Cys-1004, Cys-1013, and Cys-1014 each coordinate Zn(2+).

Belongs to the SecA family. Monomer and homodimer. Part of the essential Sec protein translocation apparatus which comprises SecA, SecYEG and auxiliary proteins SecDF. Other proteins may also be involved. It depends on Zn(2+) as a cofactor.

Its subcellular location is the cell inner membrane. It is found in the cytoplasm. It catalyses the reaction ATP + H2O + cellular proteinSide 1 = ADP + phosphate + cellular proteinSide 2.. In terms of biological role, part of the Sec protein translocase complex. Interacts with the SecYEG preprotein conducting channel. Has a central role in coupling the hydrolysis of ATP to the transfer of proteins into and across the cell membrane, serving as an ATP-driven molecular motor driving the stepwise translocation of polypeptide chains across the membrane. This chain is Protein translocase subunit SecA, found in Protochlamydia amoebophila (strain UWE25).